Here is a 391-residue protein sequence, read N- to C-terminus: F-box protein At2g34280 (391 aa).

The region spanning 1-43 (MDLLPYDVVEHILERLDVKSLLNCKSVSKQWRSTIRCRAFQER) is the F-box domain.

The protein is F-box protein At2g34280 of Arabidopsis thaliana (Mouse-ear cress).